The following is a 470-amino-acid chain: Aminoacyl transferase sphA (470 aa).

Residues serine 212, histidine 244, and threonine 272 each coordinate pyridoxal 5'-phosphate. Lysine 275 bears the N6-(pyridoxal phosphate)lysine mark.

This sequence belongs to the class-II pyridoxal-phosphate-dependent aminotransferase family. BioF subfamily. As to quaternary structure, homodimer. It depends on pyridoxal 5'-phosphate as a cofactor.

It functions in the pathway secondary metabolite biosynthesis. Aminoacyl transferase; part of the gene cluster that mediates the biosynthesis of sphingofungins, bioactive molecules acting as sphingolipid inhibitors via inhibiting serine palmitoyl transferase (SPT). Within the pathway, sphA transfers 2-methyl-aminomalonate and 2-hydroxymethyl-aminomalonate onto the sphB product 3-hydroxyoctadeca-4,10-dienoyl-ACP to produce the precursors of sphingofungins E and F. The substrate specificity of sphA using 2-methyl-aminomalonate and 2-hydroxymethyl-aminomalonate instread of aminomalonate is responsible for the biosynthesis of sphingofungins E and F but not B and C like in Aspergillus fumigatus. The PKS sphB does not contain any putative thioesterase domain for releasing the nascent polyketide chain and it has been suggested that aminoacyl transferases can facilitate the polyketide chain release. This is Aminoacyl transferase sphA from Byssochlamys spectabilis (Paecilomyces variotii).